The sequence spans 87 residues: Omega-theraphotoxin-Gr1a (87 aa).

The N-terminal stretch at 1–24 (MKAQIFVVVLGLAALSVLCYGSEA) is a signal peptide. Residues 25–49 (DESALHEEIFQLLAASDEVPKPQER) constitute a propeptide that is removed on maturation. 3 disulfides stabilise this stretch: cysteine 51-cysteine 65, cysteine 58-cysteine 70, and cysteine 64-cysteine 79. Residue valine 85 is modified to Valine amide.

As to expression, expressed by the venom gland.

It is found in the secreted. Inhibits P/Q- (Cav2.1/CACNA1A) and N-type (Cav2.2/CACNA1B) voltage-gated calcium channel by modifying voltage-dependent gating. It selectively and reversibly blocks the calcium channels coupled to glutamate release. Also inhibits potassium channels (Kv2.1/KCNB1) with lower affinity. Has also been shown to weakly inhibit Kv11.1/KCNH2/ERG1, Kv1.2/KCNA2, Kv1.3/KCNA3, Nav1.5/SCN5A, Nav1.7/SCN9A and TRPV1. This is Omega-theraphotoxin-Gr1a from Grammostola rosea (Chilean rose tarantula).